We begin with the raw amino-acid sequence, 118 residues long: Large ribosomal subunit protein bL20 (118 aa).

It belongs to the bacterial ribosomal protein bL20 family.

Functionally, binds directly to 23S ribosomal RNA and is necessary for the in vitro assembly process of the 50S ribosomal subunit. It is not involved in the protein synthesizing functions of that subunit. In Hamiltonella defensa subsp. Acyrthosiphon pisum (strain 5AT), this protein is Large ribosomal subunit protein bL20.